The following is a 360-amino-acid chain: Phospho-N-acetylmuramoyl-pentapeptide-transferase (360 aa).

Helical transmembrane passes span 26-46, 73-93, 98-118, 136-156, 168-188, 199-219, 235-255, 263-283, 288-308, and 338-358; these read TILG…AVIQ, TMGG…WADL, VWVV…DDAL, LQVL…TDPV, WVFP…VGSS, GLAI…AYAS, GVGE…GFLW, VFMG…VAVA, IVLF…MIQV, and VIVR…AMLK.

It belongs to the glycosyltransferase 4 family. MraY subfamily. The cofactor is Mg(2+).

It is found in the cell inner membrane. It catalyses the reaction UDP-N-acetyl-alpha-D-muramoyl-L-alanyl-gamma-D-glutamyl-meso-2,6-diaminopimeloyl-D-alanyl-D-alanine + di-trans,octa-cis-undecaprenyl phosphate = di-trans,octa-cis-undecaprenyl diphospho-N-acetyl-alpha-D-muramoyl-L-alanyl-D-glutamyl-meso-2,6-diaminopimeloyl-D-alanyl-D-alanine + UMP. It participates in cell wall biogenesis; peptidoglycan biosynthesis. In terms of biological role, catalyzes the initial step of the lipid cycle reactions in the biosynthesis of the cell wall peptidoglycan: transfers peptidoglycan precursor phospho-MurNAc-pentapeptide from UDP-MurNAc-pentapeptide onto the lipid carrier undecaprenyl phosphate, yielding undecaprenyl-pyrophosphoryl-MurNAc-pentapeptide, known as lipid I. The polypeptide is Phospho-N-acetylmuramoyl-pentapeptide-transferase (Halorhodospira halophila (strain DSM 244 / SL1) (Ectothiorhodospira halophila (strain DSM 244 / SL1))).